We begin with the raw amino-acid sequence, 199 residues long: Ubiquitin-conjugating enzyme E2-22 kDa (199 aa).

The UBC core domain maps to 4-154; the sequence is MAVSRIKREF…AKHWTNAYAG (151 aa). Cysteine 92 (glycyl thioester intermediate) is an active-site residue. A UBA domain is found at 161 to 199; the sequence is DCDSKIQRLRDMGIDEHEARAVLSKENWNLEKATEGLFS.

This sequence belongs to the ubiquitin-conjugating enzyme family. In terms of assembly, interacts with Rpn10. During gastrulation, expression is highest in the invaginating posterior midgut primordium (PMG), high expression is also observed in the cephalic furrow and ventral ectodermal neurogenic region. In stage 10-11 embryos, expression is high in the pole cells present in the pocket formed by the PMG. During germ band retraction, expression appears to reinitiate in many tissues, especially the gut and nervous system. After dorsal closure, expression is detectable at low levels throughout the embryo.

The enzyme catalyses S-ubiquitinyl-[E1 ubiquitin-activating enzyme]-L-cysteine + [E2 ubiquitin-conjugating enzyme]-L-cysteine = [E1 ubiquitin-activating enzyme]-L-cysteine + S-ubiquitinyl-[E2 ubiquitin-conjugating enzyme]-L-cysteine.. It functions in the pathway protein modification; protein ubiquitination. Functionally, catalyzes the covalent attachment of ubiquitin to other proteins. The sequence is that of Ubiquitin-conjugating enzyme E2-22 kDa from Drosophila melanogaster (Fruit fly).